The primary structure comprises 227 residues: Large ribosomal subunit protein bL25 (227 aa).

The tract at residues 1 to 22 is disordered; the sequence is MAETKTLAAAARHGTGKGAARS.

Belongs to the bacterial ribosomal protein bL25 family. CTC subfamily. In terms of assembly, part of the 50S ribosomal subunit; part of the 5S rRNA/L5/L18/L25 subcomplex. Contacts the 5S rRNA. Binds to the 5S rRNA independently of L5 and L18.

Functionally, this is one of the proteins that binds to the 5S RNA in the ribosome where it forms part of the central protuberance. This Methylocella silvestris (strain DSM 15510 / CIP 108128 / LMG 27833 / NCIMB 13906 / BL2) protein is Large ribosomal subunit protein bL25.